A 331-amino-acid polypeptide reads, in one-letter code: Geranylgeranyl transferase type-2 subunit beta (331 aa).

An N-acetylglycine modification is found at Gly2. A Phosphothreonine modification is found at Thr3. 6 PFTB repeats span residues 20 to 61 (LEKH…DLMG), 68 to 109 (REEI…TLYD), 116 to 157 (VNKV…ALLG), 164 to 205 (VEKA…AITS), 212 to 253 (SDLL…KIIG), and 260 to 302 (REKL…SLLG). 190-192 (HAG) contributes to the geranylgeranyl diphosphate binding site. Residues Asp238 and Cys240 each coordinate Zn(2+). 241-244 (YSWW) is a binding site for geranylgeranyl diphosphate. His290 provides a ligand contact to Zn(2+).

This sequence belongs to the protein prenyltransferase subunit beta family. As to quaternary structure, heterotrimer composed of RABGGTA, RABGGTB and CHM; within this trimer, RABGGTA and RABGGTB form the catalytic component B, while CHM (component A) mediates peptide substrate binding. The Rab GGTase dimer (RGGT) interacts with CHM (component A) prior to Rab protein binding; the association is stabilized by geranylgeranyl pyrophosphate (GGpp). The CHM:RGGT:Rab complex is destabilized by GGpp. Interaction of RABGGTB with prenylated PTP4A2 precludes its association with RABGGTA and inhibits enzyme activity. Interacts with CHODL. Interacts with non-phosphorylated form of RAB8A; phosphorylation of RAB8A at 'Thr-72' disrupts this interaction. Zn(2+) serves as cofactor.

The catalysed reaction is geranylgeranyl diphosphate + L-cysteinyl-[protein] = S-geranylgeranyl-L-cysteinyl-[protein] + diphosphate. With respect to regulation, the enzymatic reaction requires the aid of a Rab escort protein (also called component A). Functionally, catalyzes the transfer of a geranylgeranyl moiety from geranylgeranyl diphosphate to both cysteines of Rab proteins with the C-terminal sequence -XXCC, -XCXC and -CCXX, such as RAB1A, RAB3A, RAB5A and RAB7A. The protein is Geranylgeranyl transferase type-2 subunit beta (RABGGTB) of Homo sapiens (Human).